We begin with the raw amino-acid sequence, 185 residues long: Ribosome-recycling factor (185 aa).

The protein belongs to the RRF family.

It localises to the cytoplasm. Responsible for the release of ribosomes from messenger RNA at the termination of protein biosynthesis. May increase the efficiency of translation by recycling ribosomes from one round of translation to another. This Francisella philomiragia subsp. philomiragia (strain ATCC 25017 / CCUG 19701 / FSC 153 / O#319-036) protein is Ribosome-recycling factor.